A 100-amino-acid chain; its full sequence is Urease subunit gamma (100 aa).

It belongs to the urease gamma subunit family. As to quaternary structure, heterotrimer of UreA (gamma), UreB (beta) and UreC (alpha) subunits. Three heterotrimers associate to form the active enzyme.

It is found in the cytoplasm. The enzyme catalyses urea + 2 H2O + H(+) = hydrogencarbonate + 2 NH4(+). Its pathway is nitrogen metabolism; urea degradation; CO(2) and NH(3) from urea (urease route): step 1/1. In Saccharopolyspora erythraea (strain ATCC 11635 / DSM 40517 / JCM 4748 / NBRC 13426 / NCIMB 8594 / NRRL 2338), this protein is Urease subunit gamma.